We begin with the raw amino-acid sequence, 105 residues long: DNA-directed RNA polymerase subunit omega (105 aa).

It belongs to the RNA polymerase subunit omega family. As to quaternary structure, the RNAP catalytic core consists of 2 alpha, 1 beta, 1 beta' and 1 omega subunit. When a sigma factor is associated with the core the holoenzyme is formed, which can initiate transcription.

The enzyme catalyses RNA(n) + a ribonucleoside 5'-triphosphate = RNA(n+1) + diphosphate. In terms of biological role, promotes RNA polymerase assembly. Latches the N- and C-terminal regions of the beta' subunit thereby facilitating its interaction with the beta and alpha subunits. The polypeptide is DNA-directed RNA polymerase subunit omega (Streptococcus equi subsp. equi (strain 4047)).